The following is a 301-amino-acid chain: Probable alpha-L-glutamate ligase (301 aa).

Residues 104–287 (LQLLSRKGIG…VADMIFEFIE (184 aa)) form the ATP-grasp domain. ATP is bound by residues K141, 178 to 179 (EF), D187, and 211 to 213 (RSN). Residues D248, E260, and N262 each coordinate Mg(2+). Mn(2+) is bound by residues D248, E260, and N262.

The protein belongs to the RimK family. Mg(2+) is required as a cofactor. The cofactor is Mn(2+).

The polypeptide is Probable alpha-L-glutamate ligase (Vibrio atlanticus (strain LGP32) (Vibrio splendidus (strain Mel32))).